The primary structure comprises 375 residues: uncharacterized protein (375 aa).

7 helical membrane-spanning segments follow: residues 21–41 (LLLL…IVLF), 66–86 (IIVF…FCVS), 160–180 (LVGV…PGIV), 203–223 (LVGL…HLLI), 234–254 (FYMV…FHLF), 289–309 (VISF…YFLI), and 338–358 (FFLM…MLFF).

The protein resides in the cell membrane. This is an uncharacterized protein from Mycoplasma genitalium (strain ATCC 33530 / DSM 19775 / NCTC 10195 / G37) (Mycoplasmoides genitalium).